Here is a 238-residue protein sequence, read N- to C-terminus: Thymidine kinase a (238 aa).

ATP is bound by residues 38–45 (GPMFSGKS), 70–72 (DTR), and 115–118 (DEAQ). Catalysis depends on Glu-116, which acts as the Proton acceptor. Substrate is bound at residue Tyr-147. Zn(2+)-binding residues include Cys-172 and Cys-175. Residues 191-195 (TELIG) and Tyr-200 contribute to the substrate site. Cys-204 contacts Zn(2+).

It belongs to the thymidine kinase family. Monomer and dimer. Dimerization is stimulated by ATP. Expressed ubiquitously.

The protein resides in the cytoplasm. The enzyme catalyses thymidine + ATP = dTMP + ADP + H(+). Its pathway is purine metabolism. It participates in pyrimidine metabolism. Functionally, part of the salvage pathway for purine and pyrimidine deoxyribonucleotide synthesis. Phosphorylates preferentially purines over pyrimidines. Mediates tolerance to genotoxins, such as ultraviolet-C (UV-C) irradiation, MMC, a DNA crosslinker, and ZEO, a DNA intercalator, that induce double-strand breaks and thus contributes to several DNA repair pathways by providing deoxythymidine triphosphate that serve as precursors for DNA repair and to balance deoxyribonucleotides pools. This is Thymidine kinase a from Arabidopsis thaliana (Mouse-ear cress).